The following is a 300-amino-acid chain: Free fatty acid receptor 1 (300 aa).

Residues 1 to 8 (MDLPPQLS) are Extracellular-facing. A helical transmembrane segment spans residues 9 to 31 (FALYVSAFALGFPLNLLAIRGAV). The Cytoplasmic segment spans residues 32–41 (SHAKLRLTPS). A helical membrane pass occupies residues 42–64 (LVYTLHLACSDLLLAITLPLKAV). Residues 65–79 (EALASGVWPLPLPFC) are Extracellular-facing. Cys79 and Cys170 are disulfide-bonded. Residues 80 to 101 (PVFALAHFAPLYAGGGFLAALS) form a helical membrane-spanning segment. The Cytoplasmic segment spans residues 102-121 (AGRYLGAAFPFGYQAIRRPC). A helical membrane pass occupies residues 122–142 (YSWGVCVAIWALVLCHLGLAL). Topologically, residues 143-178 (GLEAPRGWVDNTTSSLGINIPVNGSPVCLEAWDPDS) are extracellular. Asn153 carries N-linked (GlcNAc...) asparagine glycosylation. Residues 179–200 (ARPARLSFSILLFFLPLVITAF) form a helical membrane-spanning segment. Over 201–223 (CYVGCLRALVHSGLSHKRKLRAA) the chain is Cytoplasmic. Residues 224 to 248 (WVAGGALLTLLLCLGPYNASNVASF) form a helical membrane-spanning segment. Over 249–256 (INPDLEGS) the chain is Extracellular. The helical transmembrane segment at 257-279 (WRKLGLITGAWSVVLNPLVTGYL) threads the bilayer. The Cytoplasmic portion of the chain corresponds to 280–300 (GTGPGQGTICVTRTPRGTIQK).

This sequence belongs to the G-protein coupled receptor 1 family. As to expression, expressed abundantly in pancreatic beta cells.

It is found in the cell membrane. In terms of biological role, G-protein coupled receptor for medium and long chain saturated and unsaturated fatty acids that plays an important role in glucose homeostasis. Fatty acid binding increases glucose-stimulated insulin secretion, and may also enhance the secretion of glucagon-like peptide 1 (GLP-1). May also play a role in bone homeostasis; receptor signaling activates pathways that inhibit osteoclast differentiation. Ligand binding leads to a conformation change that triggers signaling via G-proteins that activate phospholipase C, leading to an increase of the intracellular calcium concentration. Seems to act through a G(q) and G(i)-mediated pathway. Mediates the anti-inflammatory effects of omega-3 polyunsaturated fatty acids (PUFAs) via inhibition of NLRP3 inflammasome activation. The protein is Free fatty acid receptor 1 (Ffar1) of Rattus norvegicus (Rat).